The primary structure comprises 117 residues: Large ribosomal subunit protein bL20 (117 aa).

This sequence belongs to the bacterial ribosomal protein bL20 family.

Its function is as follows. Binds directly to 23S ribosomal RNA and is necessary for the in vitro assembly process of the 50S ribosomal subunit. It is not involved in the protein synthesizing functions of that subunit. The sequence is that of Large ribosomal subunit protein bL20 from Actinobacillus succinogenes (strain ATCC 55618 / DSM 22257 / CCUG 43843 / 130Z).